Reading from the N-terminus, the 219-residue chain is Ribose-5-phosphate isomerase A (219 aa).

Residues 28–31 (TGST), 81–84 (DGAD), and 94–97 (KGGG) each bind substrate. Catalysis depends on E103, which acts as the Proton acceptor. Residue K121 coordinates substrate.

The protein belongs to the ribose 5-phosphate isomerase family. As to quaternary structure, homodimer.

The enzyme catalyses aldehydo-D-ribose 5-phosphate = D-ribulose 5-phosphate. It participates in carbohydrate degradation; pentose phosphate pathway; D-ribose 5-phosphate from D-ribulose 5-phosphate (non-oxidative stage): step 1/1. Its function is as follows. Catalyzes the reversible conversion of ribose-5-phosphate to ribulose 5-phosphate. This Escherichia fergusonii (strain ATCC 35469 / DSM 13698 / CCUG 18766 / IAM 14443 / JCM 21226 / LMG 7866 / NBRC 102419 / NCTC 12128 / CDC 0568-73) protein is Ribose-5-phosphate isomerase A.